The chain runs to 290 residues: Microtubule-associated protein P320 (290 aa).

8 consecutive repeats follow at residues 1–38 (SEYR…PIDP), 39–76 (SEYR…PIDP), 77–114 (SEYR…PIDP), 115–152 (SEYR…PIDP), 153–190 (SEYR…PIDP), 191–228 (SEYR…PIDP), 229–266 (SEYR…PIDP), and 267–290 (SEYR…DESH). Positions 251-290 (SHFLTTTHEAYKPIDPSEYRQKRTVGEEVTTDMRHVDESH) are disordered. Residues 259 to 290 (EAYKPIDPSEYRQKRTVGEEVTTDMRHVDESH) show a composition bias toward basic and acidic residues.

The protein localises to the cytoplasm. It is found in the cytoskeleton. This chain is Microtubule-associated protein P320, found in Trypanosoma brucei brucei.